A 323-amino-acid chain; its full sequence is D-alanine--D-alanine ligase (323 aa).

Residues 120–319 (LSVLKPYGIK…LEDLFTNAIE (200 aa)) form the ATP-grasp domain. 148 to 203 (VKKVGLPCFVKPNKAGSSFGISKVKSEAELPIAIEVAYKEDNEIIIESFLDGTEVS) serves as a coordination point for ATP. Residues E274, E286, and N288 each contribute to the Mg(2+) site.

This sequence belongs to the D-alanine--D-alanine ligase family. The cofactor is Mg(2+). It depends on Mn(2+) as a cofactor.

Its subcellular location is the cytoplasm. The catalysed reaction is 2 D-alanine + ATP = D-alanyl-D-alanine + ADP + phosphate + H(+). The protein operates within cell wall biogenesis; peptidoglycan biosynthesis. In terms of biological role, cell wall formation. The sequence is that of D-alanine--D-alanine ligase from Flavobacterium johnsoniae (strain ATCC 17061 / DSM 2064 / JCM 8514 / BCRC 14874 / CCUG 350202 / NBRC 14942 / NCIMB 11054 / UW101) (Cytophaga johnsonae).